A 234-amino-acid polypeptide reads, in one-letter code: 1-(5-phosphoribosyl)-5-[(5-phosphoribosylamino)methylideneamino] imidazole-4-carboxamide isomerase (234 aa).

The active-site Proton acceptor is Asp-9. The Proton donor role is filled by Asp-131.

This sequence belongs to the HisA/HisF family.

The protein localises to the cytoplasm. It catalyses the reaction 1-(5-phospho-beta-D-ribosyl)-5-[(5-phospho-beta-D-ribosylamino)methylideneamino]imidazole-4-carboxamide = 5-[(5-phospho-1-deoxy-D-ribulos-1-ylimino)methylamino]-1-(5-phospho-beta-D-ribosyl)imidazole-4-carboxamide. Its pathway is amino-acid biosynthesis; L-histidine biosynthesis; L-histidine from 5-phospho-alpha-D-ribose 1-diphosphate: step 4/9. The protein is 1-(5-phosphoribosyl)-5-[(5-phosphoribosylamino)methylideneamino] imidazole-4-carboxamide isomerase of Staphylococcus aureus (strain JH1).